The sequence spans 423 residues: AP-1 complex subunit mu-2 (423 aa).

In terms of domain architecture, MHD spans 168–421 (KNEVFIDVIE…ITQSGDYQLR (254 aa)).

This sequence belongs to the adaptor complexes medium subunit family. As to quaternary structure, adaptor protein complex 1 (AP-1) is a heterotetramer composed of two large adaptins (gamma-type subunit AP1G1 and beta-type subunit AP1B1), a medium adaptin (mu-type subunit AP1M1 or AP1M2) and a small adaptin (sigma-type subunit AP1S1 or AP1S2 or AP1S3). Interacts with P2X4. In terms of processing, phosphorylation of membrane-bound AP1M1/AP1M2 increases its affinity for sorting signals.

The protein resides in the cytoplasmic vesicle. It localises to the clathrin-coated vesicle membrane. Its subcellular location is the golgi apparatus. Functionally, subunit of clathrin-associated adaptor protein complex 1 that plays a role in protein sorting in the trans-Golgi network (TGN) and endosomes. The AP complexes mediate the recruitment of clathrin to membranes and the recognition of sorting signals within the cytosolic tails of transmembrane cargo molecules. The sequence is that of AP-1 complex subunit mu-2 from Bos taurus (Bovine).